The chain runs to 428 residues: Serine--tRNA ligase (428 aa).

231 to 233 (TAE) serves as a coordination point for L-serine. 262–264 (RSE) contacts ATP. Glu285 lines the L-serine pocket. Position 349–352 (349–352 (EISS)) interacts with ATP. Ser385 is a binding site for L-serine.

The protein belongs to the class-II aminoacyl-tRNA synthetase family. Type-1 seryl-tRNA synthetase subfamily. In terms of assembly, homodimer. The tRNA molecule binds across the dimer.

It is found in the cytoplasm. It carries out the reaction tRNA(Ser) + L-serine + ATP = L-seryl-tRNA(Ser) + AMP + diphosphate + H(+). The catalysed reaction is tRNA(Sec) + L-serine + ATP = L-seryl-tRNA(Sec) + AMP + diphosphate + H(+). Its pathway is aminoacyl-tRNA biosynthesis; selenocysteinyl-tRNA(Sec) biosynthesis; L-seryl-tRNA(Sec) from L-serine and tRNA(Sec): step 1/1. Its function is as follows. Catalyzes the attachment of serine to tRNA(Ser). Is also able to aminoacylate tRNA(Sec) with serine, to form the misacylated tRNA L-seryl-tRNA(Sec), which will be further converted into selenocysteinyl-tRNA(Sec). The sequence is that of Serine--tRNA ligase from Staphylococcus haemolyticus (strain JCSC1435).